Here is a 132-residue protein sequence, read N- to C-terminus: Fluoride-specific ion channel FluC 1 (132 aa).

Helical transmembrane passes span Ala-11–Ile-31, Trp-37–Thr-57, Arg-70–Ile-92, and Ala-105–Val-125. Gly-79 and Thr-82 together coordinate Na(+).

This sequence belongs to the fluoride channel Fluc/FEX (TC 1.A.43) family.

It is found in the cell membrane. It carries out the reaction fluoride(in) = fluoride(out). Na(+) is not transported, but it plays an essential structural role and its presence is essential for fluoride channel function. Functionally, fluoride-specific ion channel. Important for reducing fluoride concentration in the cell, thus reducing its toxicity. This Mycobacterium bovis (strain ATCC BAA-935 / AF2122/97) protein is Fluoride-specific ion channel FluC 1.